The sequence spans 298 residues: Glycine--tRNA ligase alpha subunit (298 aa).

The protein belongs to the class-II aminoacyl-tRNA synthetase family. As to quaternary structure, tetramer of two alpha and two beta subunits.

Its subcellular location is the cytoplasm. The catalysed reaction is tRNA(Gly) + glycine + ATP = glycyl-tRNA(Gly) + AMP + diphosphate. The chain is Glycine--tRNA ligase alpha subunit from Helicobacter hepaticus (strain ATCC 51449 / 3B1).